The sequence spans 662 residues: DNA topoisomerase 4 subunit B (662 aa).

ATP is bound by residues Tyr-20, Asn-60, Asp-87, 129-135 (GLHGVGI), and Lys-359. Residues 439-553 (TELFIVEGDS…EGHLYLAKPP (115 aa)) form the Toprim domain. 3 residues coordinate Mg(2+): Glu-445, Asp-518, and Asp-520.

It belongs to the type II topoisomerase family. ParE type 1 subfamily. In terms of assembly, heterotetramer composed of ParC and ParE. Requires Mg(2+) as cofactor. Mn(2+) is required as a cofactor. Ca(2+) serves as cofactor.

It carries out the reaction ATP-dependent breakage, passage and rejoining of double-stranded DNA.. Topoisomerase IV is essential for chromosome segregation. It relaxes supercoiled DNA. Performs the decatenation events required during the replication of a circular DNA molecule. The sequence is that of DNA topoisomerase 4 subunit B from Rickettsia prowazekii (strain Madrid E).